The sequence spans 72 residues: UPF0154 protein BPUM_1692 (72 aa).

The chain crosses the membrane as a helical span at residues 4–24 (WVVILVGVVALLAGVALGFFI).

This sequence belongs to the UPF0154 family.

It is found in the cell membrane. This is UPF0154 protein BPUM_1692 from Bacillus pumilus (strain SAFR-032).